Consider the following 235-residue polypeptide: Purine nucleoside phosphorylase DeoD-type (235 aa).

H4 is an a purine D-ribonucleoside binding site. Phosphate-binding positions include G20, R24, R43, and 87 to 90 (RVGT). A purine D-ribonucleoside is bound by residues 179–181 (EME) and 203–204 (SD). D204 (proton donor) is an active-site residue.

This sequence belongs to the PNP/UDP phosphorylase family. Homohexamer; trimer of homodimers.

It carries out the reaction a purine D-ribonucleoside + phosphate = a purine nucleobase + alpha-D-ribose 1-phosphate. The catalysed reaction is a purine 2'-deoxy-D-ribonucleoside + phosphate = a purine nucleobase + 2-deoxy-alpha-D-ribose 1-phosphate. In terms of biological role, catalyzes the reversible phosphorolytic breakdown of the N-glycosidic bond in the beta-(deoxy)ribonucleoside molecules, with the formation of the corresponding free purine bases and pentose-1-phosphate. This is Purine nucleoside phosphorylase DeoD-type from Clostridium perfringens (strain SM101 / Type A).